The following is a 245-amino-acid chain: Photosystem II protein PSBS1 (245 aa).

The N-terminal 25 residues, 1–25, are a transit peptide targeting the chloroplast; that stretch reads MAMTLSTKAFAQRGVSARKNTVRVY. 4 consecutive transmembrane segments (helical) span residues 72 to 92, 108 to 128, 185 to 205, and 217 to 237; these read LFVGRLAMVGFSASLIGEILT, GIEVDGLVIGLIAFNLIAAVL, LGFAFSLIGEAVTGKGALAQF, and EFGLVVFILFLLFAAINEGSG.

It belongs to the ELIP/psbS family.

Its subcellular location is the plastid. It localises to the chloroplast thylakoid membrane. Its function is as follows. Required for non-photochemical quenching (NPQ), a mechanism that converts and dissipates the harmful excess absorbed light energy into heat and protect the photosynthetic apparatus from photo-oxidative damage. Seems involved in the activation of NPQ, possibly by promoting conformational changes required for activation of LHCSR3-dependent quenching in the antenna of photosystem II (PSII). The sequence is that of Photosystem II protein PSBS1 from Chlamydomonas reinhardtii (Chlamydomonas smithii).